A 1131-amino-acid chain; its full sequence is Inositol hexakisphosphate and diphosphoinositol-pentakisphosphate kinase 2 (1131 aa).

A disordered region spans residues 21–53; the sequence is DELLDQSKPENLDNLYEHTEDEEDEEDDEYDSP. The span at 25-38 shows a compositional bias: basic and acidic residues; sequence DQSKPENLDNLYEH. Acidic residues predominate over residues 39-52; the sequence is TEDEEDEEDDEYDS. Residue 67–68 coordinates substrate; sequence KK. Residues arginine 148, lysine 201, histidine 208, arginine 227, 251–254, and 260–262 contribute to the ATP site; these read EEFM and DVK. Substrate is bound at residue 227-228; the sequence is RK. Residues lysine 262 and arginine 276 each contribute to the substrate site. Residues serine 278, aspartate 323, and 335 to 337 contribute to the ATP site; that span reads DVN. Residue 340–343 coordinates substrate; the sequence is SFVK. The interval 385-456 is polyphosphoinositide-binding domain; that stretch reads PTTSGTKMEL…VLDIARQLLV (72 aa). Positions 912–951 are disordered; that stretch reads KGCEEDKNLPSGFGYRPASQENESSKKHTHANDSDEDLGV. A compositionally biased stretch (basic and acidic residues) spans 934-951; the sequence is ESSKKHTHANDSDEDLGV.

Belongs to the histidine acid phosphatase family. VIP1 subfamily.

The protein localises to the cytoplasm. Its subcellular location is the cytosol. The enzyme catalyses 1D-myo-inositol hexakisphosphate + ATP = 1-diphospho-1D-myo-inositol 2,3,4,5,6-pentakisphosphate + ADP. It carries out the reaction 5-diphospho-1D-myo-inositol 1,2,3,4,6-pentakisphosphate + ATP + H(+) = 1,5-bis(diphospho)-1D-myo-inositol 2,3,4,6-tetrakisphosphate + ADP. Functionally, bifunctional inositol kinase that acts in concert with the IP6K kinases IP6K1, IP6K2 and IP6K3 to synthesize the diphosphate group-containing inositol pyrophosphates diphosphoinositol pentakisphosphate, PP-InsP5, and bis-diphosphoinositol tetrakisphosphate, (PP)2-InsP4. PP-InsP5 and (PP)2-InsP4, also respectively called InsP7 and InsP8, regulate a variety of cellular processes, including apoptosis, vesicle trafficking, cytoskeletal dynamics, exocytosis, insulin signaling and neutrophil activation. Phosphorylates inositol hexakisphosphate (InsP6) at position 1 to produce PP-InsP5 which is in turn phosphorylated by IP6Ks to produce (PP)2-InsP4. Alternatively, phosphorylates PP-InsP5 at position 1, produced by IP6Ks from InsP6, to produce (PP)2-InsP4. The sequence is that of Inositol hexakisphosphate and diphosphoinositol-pentakisphosphate kinase 2 from Xenopus laevis (African clawed frog).